The following is an 81-amino-acid chain: UPF0180 protein RBAM_013970 (81 aa).

It belongs to the UPF0180 family.

This Bacillus velezensis (strain DSM 23117 / BGSC 10A6 / LMG 26770 / FZB42) (Bacillus amyloliquefaciens subsp. plantarum) protein is UPF0180 protein RBAM_013970.